Here is a 382-residue protein sequence, read N- to C-terminus: Protein arginine N-methyltransferase PRMT10 (382 aa).

The interval 1–21 is disordered; it reads MASLPNGAASASAASSAAGGG. Residues 7–17 show a composition bias toward low complexity; sequence GAASASAASSA. Positions 28–359 constitute an SAM-dependent MTase PRMT-type domain; that stretch reads EVDFANYFCT…KENHRLMDME (332 aa). Catalysis depends on residues Glu142 and Glu151. Residues 189 to 229 form a dimerization arm region; that stretch reads ENKMEDLEIAMHDWNLFVEDTESYYGVNMNVLTKAYRAEHE.

It belongs to the class I-like SAM-binding methyltransferase superfamily. Protein arginine N-methyltransferase family. As to quaternary structure, ring-like homodimer.

The enzyme catalyses L-arginyl-[protein] + 2 S-adenosyl-L-methionine = N(omega),N(omega)-dimethyl-L-arginyl-[protein] + 2 S-adenosyl-L-homocysteine + 2 H(+). Methylates (mono and asymmetric dimethylation) the guanidino nitrogens of arginyl residues in some proteins. This Oryza sativa subsp. indica (Rice) protein is Protein arginine N-methyltransferase PRMT10 (PRMT10).